Reading from the N-terminus, the 147-residue chain is Large ribosomal subunit protein uL11 (147 aa).

Belongs to the universal ribosomal protein uL11 family. As to quaternary structure, part of the ribosomal stalk of the 50S ribosomal subunit. Interacts with L10 and the large rRNA to form the base of the stalk. L10 forms an elongated spine to which L12 dimers bind in a sequential fashion forming a multimeric L10(L12)X complex. One or more lysine residues are methylated.

Functionally, forms part of the ribosomal stalk which helps the ribosome interact with GTP-bound translation factors. This Corynebacterium aurimucosum (strain ATCC 700975 / DSM 44827 / CIP 107346 / CN-1) (Corynebacterium nigricans) protein is Large ribosomal subunit protein uL11.